Here is a 124-residue protein sequence, read N- to C-terminus: Phosphoribosyl-AMP cyclohydrolase (124 aa).

Asp82 contacts Mg(2+). Cys83 provides a ligand contact to Zn(2+). Mg(2+)-binding residues include Asp84 and Asp86. Residues Cys99 and Cys106 each coordinate Zn(2+).

It belongs to the PRA-CH family. Homodimer. Mg(2+) serves as cofactor. Requires Zn(2+) as cofactor.

The protein resides in the cytoplasm. The enzyme catalyses 1-(5-phospho-beta-D-ribosyl)-5'-AMP + H2O = 1-(5-phospho-beta-D-ribosyl)-5-[(5-phospho-beta-D-ribosylamino)methylideneamino]imidazole-4-carboxamide. The protein operates within amino-acid biosynthesis; L-histidine biosynthesis; L-histidine from 5-phospho-alpha-D-ribose 1-diphosphate: step 3/9. In terms of biological role, catalyzes the hydrolysis of the adenine ring of phosphoribosyl-AMP. This chain is Phosphoribosyl-AMP cyclohydrolase, found in Rhizorhabdus wittichii (strain DSM 6014 / CCUG 31198 / JCM 15750 / NBRC 105917 / EY 4224 / RW1) (Sphingomonas wittichii).